The primary structure comprises 183 residues: Pectinesterase inhibitor 8 (183 aa).

Residues Met1–Ala30 form the signal peptide. 2 cysteine pairs are disulfide-bonded: Cys36–Cys51 and Cys107–Cys147.

The protein belongs to the PMEI family.

Its subcellular location is the secreted. It localises to the extracellular space. It is found in the apoplast. Functionally, pectin methylesterase (PME) inhibitor that inhibits PME in vitro. This Oryza sativa subsp. japonica (Rice) protein is Pectinesterase inhibitor 8.